A 369-amino-acid chain; its full sequence is GTPase Obg (369 aa).

Positions 1 to 159 (MKFIDEARIE…RMLKLELKVL (159 aa)) constitute an Obg domain. Positions 128 to 147 (LHFKSSTNRAPRQKTDGKPG) are disordered. Residues 160–334 (ADVGLLGMPN…LCYAIYDYLA (175 aa)) form the OBG-type G domain. GTP-binding positions include 166–173 (GMPNAGKS), 191–195 (FTTLA), 213–216 (DIPG), 284–287 (NKLD), and 315–317 (SAL). Positions 173 and 193 each coordinate Mg(2+).

The protein belongs to the TRAFAC class OBG-HflX-like GTPase superfamily. OBG GTPase family. In terms of assembly, monomer. Mg(2+) serves as cofactor.

It localises to the cytoplasm. In terms of biological role, an essential GTPase which binds GTP, GDP and possibly (p)ppGpp with moderate affinity, with high nucleotide exchange rates and a fairly low GTP hydrolysis rate. Plays a role in control of the cell cycle, stress response, ribosome biogenesis and in those bacteria that undergo differentiation, in morphogenesis control. The chain is GTPase Obg from Burkholderia multivorans (strain ATCC 17616 / 249).